Reading from the N-terminus, the 130-residue chain is Iron-sulfur cluster insertion protein ErpA (130 aa).

3 residues coordinate iron-sulfur cluster: Cys46, Cys116, and Cys118.

It belongs to the HesB/IscA family. Homodimer. It depends on iron-sulfur cluster as a cofactor.

Its function is as follows. Required for insertion of 4Fe-4S clusters for at least IspG. The protein is Iron-sulfur cluster insertion protein ErpA of Legionella pneumophila (strain Paris).